Reading from the N-terminus, the 344-residue chain is Type VI secretion system component TssA1 (344 aa).

Homododecamer. Interacts with TssB1 and TssC1. Interacts with TssK1 and TssF1.

Functionally, core component of the H1 type VI (H1-T6SS) secretion system that plays a role in the release of toxins targeting both eukaryotic and prokaryotic species. Forms a dodecameric ring-shaped structure located at one end of the T6SS sheath. May properly attach the pre-assembled sheath onto the baseplate and/or stabilize the sheaths tubular structure. This is Type VI secretion system component TssA1 from Pseudomonas aeruginosa (strain ATCC 15692 / DSM 22644 / CIP 104116 / JCM 14847 / LMG 12228 / 1C / PRS 101 / PAO1).